The primary structure comprises 500 residues: Replication factor C large subunit (500 aa).

44 to 51 (GSPGVGKT) provides a ligand contact to ATP. Positions 443 to 500 (HAADDLGASDGETTNASGTASSSGDDGDADGTTDGDGSDANDGNDDDDDGQAGLSDFV) are disordered. Low complexity predominate over residues 455-466 (TTNASGTASSSG). Residues 467–492 (DDGDADGTTDGDGSDANDGNDDDDDG) are compositionally biased toward acidic residues.

This sequence belongs to the activator 1 small subunits family. RfcL subfamily. Heteromultimer composed of small subunits (RfcS) and large subunits (RfcL).

Part of the RFC clamp loader complex which loads the PCNA sliding clamp onto DNA. The sequence is that of Replication factor C large subunit from Halorubrum lacusprofundi (strain ATCC 49239 / DSM 5036 / JCM 8891 / ACAM 34).